Consider the following 444-residue polypeptide: Methylenetetrahydrofolate--tRNA-(uracil-5-)-methyltransferase TrmFO (444 aa).

10 to 15 serves as a coordination point for FAD; the sequence is GAGLAG.

The protein belongs to the MnmG family. TrmFO subfamily. FAD serves as cofactor.

Its subcellular location is the cytoplasm. It catalyses the reaction uridine(54) in tRNA + (6R)-5,10-methylene-5,6,7,8-tetrahydrofolate + NADH + H(+) = 5-methyluridine(54) in tRNA + (6S)-5,6,7,8-tetrahydrofolate + NAD(+). The enzyme catalyses uridine(54) in tRNA + (6R)-5,10-methylene-5,6,7,8-tetrahydrofolate + NADPH + H(+) = 5-methyluridine(54) in tRNA + (6S)-5,6,7,8-tetrahydrofolate + NADP(+). Catalyzes the folate-dependent formation of 5-methyl-uridine at position 54 (M-5-U54) in all tRNAs. The chain is Methylenetetrahydrofolate--tRNA-(uracil-5-)-methyltransferase TrmFO from Streptococcus gordonii (strain Challis / ATCC 35105 / BCRC 15272 / CH1 / DL1 / V288).